The following is a 129-amino-acid chain: Serum amyloid A-4 protein (129 aa).

The N-terminal stretch at 1–18 (MKLLIGILFCTLIMGVTG) is a signal peptide. The segment covering 107–121 (AEEWGRSGQDPDHFR) has biased composition (basic and acidic residues). The tract at residues 107–129 (AEEWGRSGQDPDHFRPAGLPKKY) is disordered.

The protein belongs to the SAA family. Apolipoprotein of the HDL complex.

The protein localises to the secreted. Major acute phase reactant. The chain is Serum amyloid A-4 protein from Bos taurus (Bovine).